The sequence spans 2979 residues: Polyketide synthase-nonribosomal peptide synthetase TwmB (2979 aa).

The Ketosynthase family 3 (KS3) domain occupies 5–435 (GAEIAIIGSG…GTNAHAILES (431 aa)). Residues Cys-176, His-315, and His-355 each act as for beta-ketoacyl synthase activity in the active site. The malonyl-CoA:ACP transacylase (MAT) domain stretch occupies residues 549-864 (VFTGQGAQWA…PYTGLFTRGV (316 aa)). Ser-643 functions as the For malonyltransferase activity in the catalytic mechanism. Residues 936 to 1070 (HDLLGHLTPN…GRVRIHLGEA (135 aa)) are N-terminal hotdog fold. Residues 936–1234 (HDLLGHLTPN…ECVPFSRQTA (299 aa)) form a dehydratase (DH) domain region. The region spanning 936–1235 (HDLLGHLTPN…CVPFSRQTAK (300 aa)) is the PKS/mFAS DH domain. The active-site Proton acceptor; for dehydratase activity is His-968. The segment at 1085 to 1235 (LVSVSEKKFY…CVPFSRQTAK (151 aa)) is C-terminal hotdog fold. Asp-1141 functions as the Proton donor; for dehydratase activity in the catalytic mechanism. Residues 1387–1572 (NFTAHLAGIL…GIDTSTVEQP (186 aa)) form an inactive methyltransferase (MT) domain region. A ketoreductase (KR)domain region spans residues 2098–2271 (TYWLVGLTGG…AASVMDIGAV (174 aa)). The Carrier domain maps to 2380-2465 (RNNEEAYGIV…ELVDTATEAI (86 aa)). Ser-2425 is subject to O-(pantetheine 4'-phosphoryl)serine. Positions 2476-2497 (YPAEQTSSQNSDSGQDMASSFD) are disordered. Residues 2479–2497 (EQTSSQNSDSGQDMASSFD) show a composition bias toward polar residues. The interval 2534–2970 (KSIPVSFTQA…MTLGQAALAE (437 aa)) is condensation.

Interacts with TwmE. Pantetheine 4'-phosphate is required as a cofactor.

It carries out the reaction 5-aminopentanoate + 7 malonyl-CoA + acetyl-CoA + 11 NADPH + 17 H(+) = wortmanamide A + 7 CO2 + 11 NADP(+) + 8 CoA + 6 H2O. The enzyme catalyses 5-aminopentanoate + 8 malonyl-CoA + acetyl-CoA + 13 NADPH + 20 H(+) = wortmanamide B + 8 CO2 + 13 NADP(+) + 9 CoA + 7 H2O. Its pathway is secondary metabolite biosynthesis. Its function is as follows. Polyketide synthase-nonribosomal peptide synthetase; part of the gene cluster that mediates the biosynthesis of wortmanamides A and B, reduced long-chain polyketides amidated with a specific omega-amino acid, 5-aminopentanoic acid (5PA). The PKS modules of TwmB are involved in the synthesis of the polyketide backbone, whereas the non-canonical C domain of TwmB is a bonafide condensation domain that specifically selects 5PA and catalyzes amidation to release polyketide chain. The C domain clearly prefers C16 and C18 fatty acyl substrates, which is consistent with simultaneous formation of both octaketide and nonaketide acyl amides wortmanamides A and B. Because TwmB lacks a designated enoylreductase (ER) domain, the required activity is provided the enoyl reductase TwmE. The roles of the remaining enzymes have still to be clarified. The chain is Polyketide synthase-nonribosomal peptide synthetase TwmB from Talaromyces wortmannii (Penicillium wortmannii).